The sequence spans 600 residues: Copine-A (600 aa).

C2 domains are found at residues M1–L111 and K116–N246. Residues D23, D29, D82, D84, D89, D151, D158, D215, D217, and D223 each coordinate Ca(2+). One can recognise a VWFA domain in the interval N286–I503. Residues Y535–T549 are compositionally biased toward low complexity. The interval Y535 to G583 is disordered. A compositionally biased stretch (polar residues) spans K555–P572.

It belongs to the copine family. It depends on Ca(2+) as a cofactor.

The protein resides in the cytoplasm. The protein localises to the membrane. Functionally, required for cytokinesis, contractile vacuole function and development. The chain is Copine-A (cpnA) from Dictyostelium discoideum (Social amoeba).